The chain runs to 796 residues: Conidiophore development regulator abaA (796 aa).

A DNA-binding region (TEA) is located at residues G133–D207. The interval R215–E254 is disordered. The segment covering H243 to Y252 has biased composition (polar residues). The segment at L341–M362 is leucine-zipper-like. Residues E612–V643 are disordered. Residues N629–V643 show a composition bias toward polar residues.

This sequence belongs to the TEC1 family.

It is found in the nucleus. Its function is as follows. BrlA, abaA and wetA are pivotal regulators of conidiophore development and conidium maturation. They act individually and together to regulate their own expression and that of numerous other sporulation-specific gene. Controls temporal and spatial specificity in Aspergillus development. Directs the differentiation of phialides and is continuously required for maintenance of their function. Expression of abaA leads to activation of brlA and wetA, cessation of vegetative growth, and accentuated cellular vacuolization. Binds to the sequence 5'-CATTCY-3', where Y is a pyrimidine, making both major- and minor-groove contacts. Multiple abaA binding sites are present in the cis-acting regulatory regions of several developmentally controlled structural genes as well as those of the upstream regulatory gene brlA, the downstream regulatory gene wetA, and abaA itself. This is Conidiophore development regulator abaA from Emericella nidulans (strain FGSC A4 / ATCC 38163 / CBS 112.46 / NRRL 194 / M139) (Aspergillus nidulans).